The sequence spans 120 residues: Secreted RxLR effector protein 29 (120 aa).

The N-terminal stretch at 1–21 (MRRTAFIVLSLVALIAPCVTS) is a signal peptide. A RxLR-dEER motif is present at residues 47–64 (RHLRSEANGRLAVVDEEK).

This sequence belongs to the RxLR effector family.

The protein resides in the secreted. Its subcellular location is the host cytoplasm. It localises to the host nucleus. Its function is as follows. Effector that acts as a broad suppressor of cell death to interrupt plant immunity. Inhibits cell death induced by cell death-inducing proteins, including the PAMP elicitor INF1 from P.infestans. The chain is Secreted RxLR effector protein 29 from Plasmopara viticola (Downy mildew of grapevine).